The sequence spans 341 residues: Anthranilate phosphoribosyltransferase (341 aa).

Residues glycine 79, 82 to 83 (GD), threonine 87, 89 to 92 (NIST), 107 to 115 (KHGNRAASS), and serine 119 each bind 5-phospho-alpha-D-ribose 1-diphosphate. Glycine 79 is an anthranilate binding site. Serine 91 lines the Mg(2+) pocket. Residue asparagine 110 participates in anthranilate binding. Arginine 165 contributes to the anthranilate binding site. Mg(2+) contacts are provided by aspartate 224 and glutamate 225.

This sequence belongs to the anthranilate phosphoribosyltransferase family. Homodimer. Mg(2+) is required as a cofactor.

The catalysed reaction is N-(5-phospho-beta-D-ribosyl)anthranilate + diphosphate = 5-phospho-alpha-D-ribose 1-diphosphate + anthranilate. The protein operates within amino-acid biosynthesis; L-tryptophan biosynthesis; L-tryptophan from chorismate: step 2/5. Its function is as follows. Catalyzes the transfer of the phosphoribosyl group of 5-phosphorylribose-1-pyrophosphate (PRPP) to anthranilate to yield N-(5'-phosphoribosyl)-anthranilate (PRA). In Dehalococcoides mccartyi (strain ATCC BAA-2266 / KCTC 15142 / 195) (Dehalococcoides ethenogenes (strain 195)), this protein is Anthranilate phosphoribosyltransferase.